Reading from the N-terminus, the 179-residue chain is Large ribosomal subunit protein uL5 (179 aa).

It belongs to the universal ribosomal protein uL5 family. In terms of assembly, part of the 50S ribosomal subunit; part of the 5S rRNA/L5/L18/L25 subcomplex. Contacts the 5S rRNA and the P site tRNA. Forms a bridge to the 30S subunit in the 70S ribosome.

Its function is as follows. This is one of the proteins that bind and probably mediate the attachment of the 5S RNA into the large ribosomal subunit, where it forms part of the central protuberance. In the 70S ribosome it contacts protein S13 of the 30S subunit (bridge B1b), connecting the 2 subunits; this bridge is implicated in subunit movement. Contacts the P site tRNA; the 5S rRNA and some of its associated proteins might help stabilize positioning of ribosome-bound tRNAs. This is Large ribosomal subunit protein uL5 from Citrifermentans bemidjiense (strain ATCC BAA-1014 / DSM 16622 / JCM 12645 / Bem) (Geobacter bemidjiensis).